An 83-amino-acid chain; its full sequence is uncharacterized protein (83 aa).

Positions 1–20 (MRRALTLAVLATCAVLPALA) are cleaved as a signal peptide.

To P.denitrificans and M.extorquens MoxJ.

This is an uncharacterized protein from Paracoccus denitrificans.